We begin with the raw amino-acid sequence, 444 residues long: GTPase Der (444 aa).

EngA-type G domains are found at residues 2 to 167 and 173 to 349; these read LKVA…LKEI and FKFC…ENLN. GTP is bound by residues 8–15, 55–59, 118–121, 179–186, 226–230, and 291–294; these read GKPNVGKS, DTGGL, NKSE, GRPNVGKS, DTAGI, and NKWD. One can recognise a KH-like domain in the interval 350–434; sequence LKFNSKILTD…PITLYFKNKT (85 aa).

It belongs to the TRAFAC class TrmE-Era-EngA-EngB-Septin-like GTPase superfamily. EngA (Der) GTPase family. In terms of assembly, associates with the 50S ribosomal subunit.

GTPase that plays an essential role in the late steps of ribosome biogenesis. The polypeptide is GTPase Der (Malacoplasma penetrans (strain HF-2) (Mycoplasma penetrans)).